The chain runs to 615 residues: Dihydroxy-acid dehydratase (615 aa).

A Mg(2+)-binding site is contributed by aspartate 85. Residue cysteine 126 coordinates [2Fe-2S] cluster. Residues aspartate 127 and lysine 128 each coordinate Mg(2+). Lysine 128 bears the N6-carboxylysine mark. A [2Fe-2S] cluster-binding site is contributed by cysteine 199. Position 495 (glutamate 495) interacts with Mg(2+). Serine 521 functions as the Proton acceptor in the catalytic mechanism.

It belongs to the IlvD/Edd family. Homodimer. It depends on [2Fe-2S] cluster as a cofactor. Mg(2+) is required as a cofactor.

It catalyses the reaction (2R)-2,3-dihydroxy-3-methylbutanoate = 3-methyl-2-oxobutanoate + H2O. It carries out the reaction (2R,3R)-2,3-dihydroxy-3-methylpentanoate = (S)-3-methyl-2-oxopentanoate + H2O. Its pathway is amino-acid biosynthesis; L-isoleucine biosynthesis; L-isoleucine from 2-oxobutanoate: step 3/4. It participates in amino-acid biosynthesis; L-valine biosynthesis; L-valine from pyruvate: step 3/4. In terms of biological role, functions in the biosynthesis of branched-chain amino acids. Catalyzes the dehydration of (2R,3R)-2,3-dihydroxy-3-methylpentanoate (2,3-dihydroxy-3-methylvalerate) into 2-oxo-3-methylpentanoate (2-oxo-3-methylvalerate) and of (2R)-2,3-dihydroxy-3-methylbutanoate (2,3-dihydroxyisovalerate) into 2-oxo-3-methylbutanoate (2-oxoisovalerate), the penultimate precursor to L-isoleucine and L-valine, respectively. This Mannheimia succiniciproducens (strain KCTC 0769BP / MBEL55E) protein is Dihydroxy-acid dehydratase.